A 336-amino-acid chain; its full sequence is Small ribosomal subunit protein uS9m (336 aa).

Residues 32–81 are disordered; the sequence is STTTTTTTTTTTTTSDEIPTTKPRFQSRFRRNQQPHQQQRSPYTSSQVTE. A compositionally biased stretch (low complexity) spans 33–45; that stretch reads TTTTTTTTTTTTT. The span at 65–81 shows a compositional bias: polar residues; sequence QPHQQQRSPYTSSQVTE.

The protein belongs to the universal ribosomal protein uS9 family. In terms of assembly, component of the mitochondrial small ribosomal subunit (mt-SSU).

Its subcellular location is the mitochondrion. In terms of biological role, component of the mitochondrial ribosome (mitoribosome), a dedicated translation machinery responsible for the synthesis of mitochondrial genome-encoded proteins, including at least some of the essential transmembrane subunits of the mitochondrial respiratory chain. The mitoribosomes are attached to the mitochondrial inner membrane and translation products are cotranslationally integrated into the membrane. The chain is Small ribosomal subunit protein uS9m (MRPS9) from Candida albicans (strain SC5314 / ATCC MYA-2876) (Yeast).